The primary structure comprises 371 residues: Tetraacyldisaccharide 4'-kinase (371 aa).

Residue 48-55 (SAGGTGKT) participates in ATP binding.

The protein belongs to the LpxK family.

The enzyme catalyses a lipid A disaccharide + ATP = a lipid IVA + ADP + H(+). Its pathway is glycolipid biosynthesis; lipid IV(A) biosynthesis; lipid IV(A) from (3R)-3-hydroxytetradecanoyl-[acyl-carrier-protein] and UDP-N-acetyl-alpha-D-glucosamine: step 6/6. Functionally, transfers the gamma-phosphate of ATP to the 4'-position of a tetraacyldisaccharide 1-phosphate intermediate (termed DS-1-P) to form tetraacyldisaccharide 1,4'-bis-phosphate (lipid IVA). This is Tetraacyldisaccharide 4'-kinase from Chlorobium chlorochromatii (strain CaD3).